The chain runs to 199 residues: Large ribosomal subunit protein eL13B (199 aa).

2 positions are modified to phosphothreonine: T144 and T152.

This sequence belongs to the eukaryotic ribosomal protein eL13 family. In terms of assembly, component of the large ribosomal subunit (LSU). Mature yeast ribosomes consist of a small (40S) and a large (60S) subunit. The 40S small subunit contains 1 molecule of ribosomal RNA (18S rRNA) and 33 different proteins (encoded by 57 genes). The large 60S subunit contains 3 rRNA molecules (25S, 5.8S and 5S rRNA) and 46 different proteins (encoded by 81 genes).

It is found in the cytoplasm. Functionally, component of the ribosome, a large ribonucleoprotein complex responsible for the synthesis of proteins in the cell. The small ribosomal subunit (SSU) binds messenger RNAs (mRNAs) and translates the encoded message by selecting cognate aminoacyl-transfer RNA (tRNA) molecules. The large subunit (LSU) contains the ribosomal catalytic site termed the peptidyl transferase center (PTC), which catalyzes the formation of peptide bonds, thereby polymerizing the amino acids delivered by tRNAs into a polypeptide chain. The nascent polypeptides leave the ribosome through a tunnel in the LSU and interact with protein factors that function in enzymatic processing, targeting, and the membrane insertion of nascent chains at the exit of the ribosomal tunnel. In Saccharomyces cerevisiae (strain ATCC 204508 / S288c) (Baker's yeast), this protein is Large ribosomal subunit protein eL13B.